Here is a 349-residue protein sequence, read N- to C-terminus: Small ribosomal subunit protein uS2 (349 aa).

It belongs to the universal ribosomal protein uS2 family.

This is Small ribosomal subunit protein uS2 from Methylocella silvestris (strain DSM 15510 / CIP 108128 / LMG 27833 / NCIMB 13906 / BL2).